The primary structure comprises 598 residues: Elongation factor 4 (598 aa).

Positions 4-181 (KKIRNFAIIA…AIVNLIPPPQ (178 aa)) constitute a tr-type G domain. GTP-binding positions include 16–21 (DHGKST) and 128–131 (NKID).

It belongs to the TRAFAC class translation factor GTPase superfamily. Classic translation factor GTPase family. LepA subfamily.

It localises to the cell membrane. The catalysed reaction is GTP + H2O = GDP + phosphate + H(+). Functionally, required for accurate and efficient protein synthesis under certain stress conditions. May act as a fidelity factor of the translation reaction, by catalyzing a one-codon backward translocation of tRNAs on improperly translocated ribosomes. Back-translocation proceeds from a post-translocation (POST) complex to a pre-translocation (PRE) complex, thus giving elongation factor G a second chance to translocate the tRNAs correctly. Binds to ribosomes in a GTP-dependent manner. The chain is Elongation factor 4 from Mesomycoplasma hyopneumoniae (strain 7448) (Mycoplasma hyopneumoniae).